We begin with the raw amino-acid sequence, 917 residues long: von Willebrand factor A domain-containing protein DDB_G0285975 (917 aa).

The interval 12 to 51 is disordered; sequence DTTTTTTPTTPTTPTTPTTTPTTTTTPTTTPTTTTTSTTP. The span at 13 to 51 shows a compositional bias: low complexity; it reads TTTTTTPTTPTTPTTPTTTPTTTTTPTTTPTTTTTSTTP. Residues 87-215 enclose the VIT domain; the sequence is RYNTGLKNIS…NVTIHLTIIS (129 aa). Residues 339–507 enclose the VWFA domain; it reads EFIFLIDCSG…NFEEQVMKLV (169 aa). Positions 679–741 constitute a t-SNARE coiled-coil homology domain; sequence LFSSENRNQT…INSIPQKSNI (63 aa). Composition is skewed to low complexity over residues 751–760 and 774–818; these read SPSEVSTSKS and NNNN…NNNN. A disordered region spans residues 751–822; the sequence is SPSEVSTSKS…NNNNNNSDNS (72 aa).

The sequence is that of von Willebrand factor A domain-containing protein DDB_G0285975 from Dictyostelium discoideum (Social amoeba).